Reading from the N-terminus, the 203-residue chain is Putative 3-methyladenine DNA glycosylase (203 aa).

It belongs to the DNA glycosylase MPG family.

This Clostridium tetani (strain Massachusetts / E88) protein is Putative 3-methyladenine DNA glycosylase.